We begin with the raw amino-acid sequence, 305 residues long: Ribosomal RNA small subunit methyltransferase H (305 aa).

S-adenosyl-L-methionine contacts are provided by residues 47-49, aspartate 66, phenylalanine 93, aspartate 108, and glutamine 115; that span reads GGH.

The protein belongs to the methyltransferase superfamily. RsmH family.

Its subcellular location is the cytoplasm. It carries out the reaction cytidine(1402) in 16S rRNA + S-adenosyl-L-methionine = N(4)-methylcytidine(1402) in 16S rRNA + S-adenosyl-L-homocysteine + H(+). Functionally, specifically methylates the N4 position of cytidine in position 1402 (C1402) of 16S rRNA. In Prochlorococcus marinus (strain MIT 9211), this protein is Ribosomal RNA small subunit methyltransferase H.